The chain runs to 120 residues: Large ribosomal subunit protein uL18c (120 aa).

Belongs to the universal ribosomal protein uL18 family. Part of the 50S ribosomal subunit; contacts the 5S rRNA.

The protein resides in the plastid. It localises to the chloroplast. Its function is as follows. Binds 5S rRNA, forms part of the central protuberance of the 50S subunit. In Pyropia yezoensis (Susabi-nori), this protein is Large ribosomal subunit protein uL18c (rpl18).